A 66-amino-acid chain; its full sequence is Large ribosomal subunit protein uL29 (66 aa).

Belongs to the universal ribosomal protein uL29 family.

This Borreliella burgdorferi (strain ZS7) (Borrelia burgdorferi) protein is Large ribosomal subunit protein uL29.